Consider the following 225-residue polypeptide: Enolase-phosphatase E1 (225 aa).

This sequence belongs to the HAD-like hydrolase superfamily. MasA/MtnC family. As to quaternary structure, monomer. Mg(2+) is required as a cofactor.

The enzyme catalyses 5-methylsulfanyl-2,3-dioxopentyl phosphate + H2O = 1,2-dihydroxy-5-(methylsulfanyl)pent-1-en-3-one + phosphate. It participates in amino-acid biosynthesis; L-methionine biosynthesis via salvage pathway; L-methionine from S-methyl-5-thio-alpha-D-ribose 1-phosphate: step 3/6. It functions in the pathway amino-acid biosynthesis; L-methionine biosynthesis via salvage pathway; L-methionine from S-methyl-5-thio-alpha-D-ribose 1-phosphate: step 4/6. Bifunctional enzyme that catalyzes the enolization of 2,3-diketo-5-methylthiopentyl-1-phosphate (DK-MTP-1-P) into the intermediate 2-hydroxy-3-keto-5-methylthiopentenyl-1-phosphate (HK-MTPenyl-1-P), which is then dephosphorylated to form the acireductone 1,2-dihydroxy-3-keto-5-methylthiopentene (DHK-MTPene). This Shewanella loihica (strain ATCC BAA-1088 / PV-4) protein is Enolase-phosphatase E1.